Here is a 412-residue protein sequence, read N- to C-terminus: Putative competence-damage inducible protein (412 aa).

It belongs to the CinA family.

This Bacillus thuringiensis (strain Al Hakam) protein is Putative competence-damage inducible protein.